Here is a 174-residue protein sequence, read N- to C-terminus: MKSVKKLLLLAFAVCLAVGFSGCLEQPKIEVVGQKIQKVDADNTKIEIQVLVDNPNPIGISIDKISFDIYALVGGDKIYLGHGEQSNIKITSGNTTFTLPVTISNKKLVEVALKEKSTKIPIEIKGDIAVNLFITKVNIPIDIQQEIDVSAIAKEEVLNQLNNLNPNQIQSIAQ.

A helical transmembrane segment spans residues 7–24; sequence LLLLAFAVCLAVGFSGCL.

It localises to the membrane. This is an uncharacterized protein from Methanocaldococcus jannaschii (strain ATCC 43067 / DSM 2661 / JAL-1 / JCM 10045 / NBRC 100440) (Methanococcus jannaschii).